Here is a 360-residue protein sequence, read N- to C-terminus: Probable mannan endo-1,4-beta-mannosidase A (360 aa).

Residues 1–18 form the signal peptide; that stretch reads MKLSQILTFASLLSGALA. Substrate-binding residues include Asn-142 and Asn-178. Catalysis depends on Glu-179, which acts as the Proton donor. Tyr-254 contacts substrate. The Nucleophile role is filled by Glu-287. The N-linked (GlcNAc...) asparagine glycan is linked to Asn-307. Trp-317 is a binding site for substrate.

It belongs to the glycosyl hydrolase 5 (cellulase A) family.

Its subcellular location is the secreted. It carries out the reaction Random hydrolysis of (1-&gt;4)-beta-D-mannosidic linkages in mannans, galactomannans and glucomannans.. Endo-1,4-mannanase, a crucial enzyme for depolymerization of seed galactomannans and wood galactoglucomannans. The chain is Probable mannan endo-1,4-beta-mannosidase A (manA) from Aspergillus clavatus (strain ATCC 1007 / CBS 513.65 / DSM 816 / NCTC 3887 / NRRL 1 / QM 1276 / 107).